The chain runs to 243 residues: Uridylate kinase (243 aa).

18–21 (KLGG) lines the ATP pocket. Gly-59 is a binding site for UMP. ATP is bound by residues Gly-60 and Arg-64. UMP is bound by residues Asp-79 and 140 to 147 (MGMPYFST). Tyr-173 and Asp-176 together coordinate ATP.

Belongs to the UMP kinase family. In terms of assembly, homohexamer.

It localises to the cytoplasm. The catalysed reaction is UMP + ATP = UDP + ADP. Its pathway is pyrimidine metabolism; CTP biosynthesis via de novo pathway; UDP from UMP (UMPK route): step 1/1. Inhibited by UTP. Catalyzes the reversible phosphorylation of UMP to UDP. This is Uridylate kinase from Corynebacterium diphtheriae (strain ATCC 700971 / NCTC 13129 / Biotype gravis).